We begin with the raw amino-acid sequence, 247 residues long: Type III pantothenate kinase (247 aa).

Residue 7-14 (AIGNSRWH) participates in ATP binding. Substrate contacts are provided by residues Tyr91 and 95 to 98 (GLDR). Asp97 serves as the catalytic Proton acceptor. A K(+)-binding site is contributed by Asp117. An ATP-binding site is contributed by Thr120.

The protein belongs to the type III pantothenate kinase family. In terms of assembly, homodimer. The cofactor is NH4(+). It depends on K(+) as a cofactor.

It is found in the cytoplasm. It carries out the reaction (R)-pantothenate + ATP = (R)-4'-phosphopantothenate + ADP + H(+). It participates in cofactor biosynthesis; coenzyme A biosynthesis; CoA from (R)-pantothenate: step 1/5. Catalyzes the phosphorylation of pantothenate (Pan), the first step in CoA biosynthesis. In Synechococcus sp. (strain ATCC 27144 / PCC 6301 / SAUG 1402/1) (Anacystis nidulans), this protein is Type III pantothenate kinase.